The following is a 352-amino-acid chain: SKP1-like protein 20 (352 aa).

The tract at residues 108-167 (TSAADSLQLKPLVDLTSRALARIIEGKNPEEIREIFHLPDDLTEEEKLEPLKNSMDDPRI) is interaction with the F-box domain of F-box proteins. Disordered regions lie at residues 214-251 (KAVK…RSKQ) and 267-288 (LLSA…DIDD). Basic residues predominate over residues 216–230 (VKMSKGKKKKKKKKD). Residues 239–249 (IHDKESHDLRS) show a composition bias toward basic and acidic residues.

It belongs to the SKP1 family. Part of a SCF (SKP1-cullin-F-box) protein ligase complex. As to expression, expressed in young seedlings, roots, leaves, floral stems, inflorescences, and siliques.

The protein localises to the nucleus. It functions in the pathway protein modification; protein ubiquitination. In terms of biological role, involved in ubiquitination and subsequent proteasomal degradation of target proteins. Together with CUL1, RBX1 and a F-box protein, it forms a SCF E3 ubiquitin ligase complex. The functional specificity of this complex depends on the type of F-box protein. In the SCF complex, it serves as an adapter that links the F-box protein to CUL1. This Arabidopsis thaliana (Mouse-ear cress) protein is SKP1-like protein 20 (ASK20).